Consider the following 473-residue polypeptide: Iron transporter SMF3 (473 aa).

Transmembrane regions (helical) follow at residues F14–S34 and T44–V64. The N-linked (GlcNAc...) asparagine glycan is linked to N87. A run of 9 helical transmembrane segments spans residues A97 to F117, I119 to Y139, F152 to F172, A198 to G218, L257 to G277, L297 to S317, L352 to D372, I373 to I393, and V448 to G468.

This sequence belongs to the NRAMP family.

Its subcellular location is the vacuole membrane. It is found in the endoplasmic reticulum membrane. Has a role in controlling the cellular iron ion levels. Mobilizes vacuolar stores of iron in conditions of low iron levels. This is Iron transporter SMF3 (SMF3) from Saccharomyces cerevisiae (strain ATCC 204508 / S288c) (Baker's yeast).